A 215-amino-acid chain; its full sequence is Probable phosphoglycerate mutase GpmB (215 aa).

Substrate contacts are provided by residues 8-15 (RHGETLWN), 21-22 (QG), Arg-58, Arg-60, 82-85 (ELNM), and 151-152 (GM). Catalysis depends on His-9, which acts as the Tele-phosphohistidine intermediate. The Proton donor/acceptor role is filled by Glu-82.

Belongs to the phosphoglycerate mutase family. GpmB subfamily.

It carries out the reaction (2R)-2-phosphoglycerate = (2R)-3-phosphoglycerate. It participates in carbohydrate degradation; glycolysis; pyruvate from D-glyceraldehyde 3-phosphate: step 3/5. This is Probable phosphoglycerate mutase GpmB from Erwinia tasmaniensis (strain DSM 17950 / CFBP 7177 / CIP 109463 / NCPPB 4357 / Et1/99).